A 542-amino-acid chain; its full sequence is DM7 family protein GG17591 (542 aa).

Positions 415 to 430 (GETQEMDEAHPTKEES) are enriched in basic and acidic residues. The tract at residues 415 to 443 (GETQEMDEAHPTKEESKSEEEGEVQSGSQ) is disordered.

It belongs to the DM7 family.

The protein is DM7 family protein GG17591 of Drosophila erecta (Fruit fly).